We begin with the raw amino-acid sequence, 202 residues long: Small ribosomal subunit protein uS4 (202 aa).

Residues 22–43 (TRKSARRAYPPGQHGQNRRKRS) are disordered. In terms of domain architecture, S4 RNA-binding spans 90-152 (MRLDNTVFRL…EKSKEMVKTN (63 aa)).

It belongs to the universal ribosomal protein uS4 family. Part of the 30S ribosomal subunit. Contacts protein S5. The interaction surface between S4 and S5 is involved in control of translational fidelity.

In terms of biological role, one of the primary rRNA binding proteins, it binds directly to 16S rRNA where it nucleates assembly of the body of the 30S subunit. Functionally, with S5 and S12 plays an important role in translational accuracy. The sequence is that of Small ribosomal subunit protein uS4 from Trichodesmium erythraeum (strain IMS101).